We begin with the raw amino-acid sequence, 175 residues long: Acetyl-CoA decarbonylase/synthase complex subunit epsilon 2 (175 aa).

It belongs to the CdhB family. In terms of assembly, heterotetramer of two alpha and two epsilon subunits. The ACDS complex is made up of alpha, epsilon, beta, gamma and delta subunits with a probable stoichiometry of (alpha(2)epsilon(2))(4)-beta(8)-(gamma(1)delta(1))(8).

Functionally, part of a complex that catalyzes the reversible cleavage of acetyl-CoA, allowing autotrophic growth from CO(2). The alpha-epsilon subcomponent functions as a carbon monoxide dehydrogenase. The precise role of the epsilon subunit is unclear; it may have a stabilizing role within the alpha(2)epsilon(2) component and/or be involved in electron transfer to FAD during a potential FAD-mediated CO oxidation. This is Acetyl-CoA decarbonylase/synthase complex subunit epsilon 2 (cdhB2) from Archaeoglobus fulgidus (strain ATCC 49558 / DSM 4304 / JCM 9628 / NBRC 100126 / VC-16).